Here is a 587-residue protein sequence, read N- to C-terminus: Nucleoporin p58/p45 (587 aa).

Repeat copies occupy residues 7-8 (FG), 30-31 (FG), 44-45 (FG), 63-64 (FG), and 68-69 (FG). The tract at residues 7 to 567 (FGSGTLGSTT…VSNPASAGFG (561 aa)) is 14 X 2 AA repeats of F-G. Positions 196 to 236 (TSAASNEGLGGIDFSTSSDKKSDKTGTRPEDSKALKDENLP) are disordered. Over residues 213 to 234 (SDKKSDKTGTRPEDSKALKDEN) the composition is skewed to basic and acidic residues. Coiled coils occupy residues 244–264 (ENLQKFVKEQKQVQEEISRMS) and 302–369 (ETAQ…SHIT). Thr319 carries the post-translational modification Phosphothreonine. 9 tandem repeats follow at residues 476-477 (FG), 480-481 (FG), 501-502 (FG), 507-508 (FG), 517-518 (FG), 519-520 (FG), 533-534 (FG), 556-557 (FG), and 566-567 (FG). The interval 565-587 (GFGTGGQLLQLKRPPAGNKRGKR) is disordered.

Belongs to the NUP58 family. In terms of assembly, component of the p62 complex, a complex at least composed of NUP62, NUP54, and NUP58. Interacts with NUTF2. Interacts with SRP1-alpha and Importin p97 proteins when they are together, but not with SRP1-alpha protein alone. In terms of processing, O-glycosylated.

It is found in the nucleus. The protein resides in the nuclear pore complex. The protein localises to the nucleus membrane. In terms of biological role, component of the nuclear pore complex, a complex required for the trafficking across the nuclear membrane. The polypeptide is Nucleoporin p58/p45 (Mus musculus (Mouse)).